A 551-amino-acid chain; its full sequence is Adenine deaminase (551 aa).

The protein belongs to the metallo-dependent hydrolases superfamily. Adenine deaminase family. Requires Mn(2+) as cofactor.

The enzyme catalyses adenine + H2O + H(+) = hypoxanthine + NH4(+). The protein is Adenine deaminase of Leuconostoc citreum (strain KM20).